The primary structure comprises 131 residues: DNA-directed RNA polymerase subunit omega (131 aa).

The disordered stretch occupies residues 78 to 131 (DEPEAEAVPALSSAPDAAQSDAMGDVQFDRMTEEDLLRGLEGLVPPAATDDDGE). Basic and acidic residues predominate over residues 104 to 115 (QFDRMTEEDLLR).

Belongs to the RNA polymerase subunit omega family. The RNAP catalytic core consists of 2 alpha, 1 beta, 1 beta' and 1 omega subunit. When a sigma factor is associated with the core the holoenzyme is formed, which can initiate transcription.

It carries out the reaction RNA(n) + a ribonucleoside 5'-triphosphate = RNA(n+1) + diphosphate. Its function is as follows. Promotes RNA polymerase assembly. Latches the N- and C-terminal regions of the beta' subunit thereby facilitating its interaction with the beta and alpha subunits. In Beijerinckia indica subsp. indica (strain ATCC 9039 / DSM 1715 / NCIMB 8712), this protein is DNA-directed RNA polymerase subunit omega.